Reading from the N-terminus, the 71-residue chain is Sec-independent protein translocase protein TatA (71 aa).

The chain crosses the membrane as a helical span at residues methionine 1–glycine 21. The segment at alanine 47 to serine 71 is disordered. Residues glutamate 49–serine 71 are compositionally biased toward basic and acidic residues.

This sequence belongs to the TatA/E family. In terms of assembly, the Tat system comprises two distinct complexes: a TatABC complex, containing multiple copies of TatA, TatB and TatC subunits, and a separate TatA complex, containing only TatA subunits. Substrates initially bind to the TatABC complex, which probably triggers association of the separate TatA complex to form the active translocon.

It localises to the cell inner membrane. Part of the twin-arginine translocation (Tat) system that transports large folded proteins containing a characteristic twin-arginine motif in their signal peptide across membranes. TatA could form the protein-conducting channel of the Tat system. This is Sec-independent protein translocase protein TatA from Chelativorans sp. (strain BNC1).